The primary structure comprises 257 residues: UPF0246 protein Shewmr4_2963 (257 aa).

Belongs to the UPF0246 family.

This chain is UPF0246 protein Shewmr4_2963, found in Shewanella sp. (strain MR-4).